The following is a 114-amino-acid chain: Large ribosomal subunit protein bL21 (114 aa).

The protein belongs to the bacterial ribosomal protein bL21 family. As to quaternary structure, part of the 50S ribosomal subunit. Contacts protein L20.

Functionally, this protein binds to 23S rRNA in the presence of protein L20. The sequence is that of Large ribosomal subunit protein bL21 from Protochlamydia amoebophila (strain UWE25).